Reading from the N-terminus, the 486-residue chain is UDP-N-acetylmuramoyl-L-alanyl-D-glutamate--2,6-diaminopimelate ligase (486 aa).

Residue S31 coordinates UDP-N-acetyl-alpha-D-muramoyl-L-alanyl-D-glutamate. 109–115 (GTNGKTT) is a binding site for ATP. UDP-N-acetyl-alpha-D-muramoyl-L-alanyl-D-glutamate-binding positions include N150, 151–152 (TT), S178, and R186. Position 218 is an N6-carboxylysine (K218). Meso-2,6-diaminopimelate-binding positions include R381, 405 to 408 (DNPR), G455, and E459. The Meso-diaminopimelate recognition motif signature appears at 405-408 (DNPR).

It belongs to the MurCDEF family. MurE subfamily. Mg(2+) serves as cofactor. Post-translationally, carboxylation is probably crucial for Mg(2+) binding and, consequently, for the gamma-phosphate positioning of ATP.

It localises to the cytoplasm. It catalyses the reaction UDP-N-acetyl-alpha-D-muramoyl-L-alanyl-D-glutamate + meso-2,6-diaminopimelate + ATP = UDP-N-acetyl-alpha-D-muramoyl-L-alanyl-gamma-D-glutamyl-meso-2,6-diaminopimelate + ADP + phosphate + H(+). It participates in cell wall biogenesis; peptidoglycan biosynthesis. Functionally, catalyzes the addition of meso-diaminopimelic acid to the nucleotide precursor UDP-N-acetylmuramoyl-L-alanyl-D-glutamate (UMAG) in the biosynthesis of bacterial cell-wall peptidoglycan. The protein is UDP-N-acetylmuramoyl-L-alanyl-D-glutamate--2,6-diaminopimelate ligase of Halalkalibacterium halodurans (strain ATCC BAA-125 / DSM 18197 / FERM 7344 / JCM 9153 / C-125) (Bacillus halodurans).